Consider the following 404-residue polypeptide: Multidrug resistance protein MdtH (404 aa).

Topologically, residues 1–12 are cytoplasmic; that stretch reads MSRVSQARNLGK. The chain crosses the membrane as a helical span at residues 13-33; the sequence is YFLLIDNMLVVLGFFVVFPLI. At 34–98 the chain is on the periplasmic side; that stretch reads SIRFVDQMGW…GFATMGIAHE (65 aa). Residues 99-116 form a helical membrane-spanning segment; it reads PWLLWFSCFLSGLGGTLF. Residues 117–138 are Cytoplasmic-facing; the sequence is DPPRSALVVKLIRPEQRGRFFS. Residues 139 to 159 form a helical membrane-spanning segment; the sequence is LLMMQDSAGAVIGALLGSWLL. Over 160–164 the chain is Periplasmic; it reads QYDFR. The helical transmembrane segment at 165–185 threads the bilayer; it reads LVCAMGAILFIVCAIFNAWLL. Residues 186 to 213 are Cytoplasmic-facing; that stretch reads PAWKLSTVRTPVREGMRRVISDKRFVTY. The chain crosses the membrane as a helical span at residues 214 to 234; that stretch reads VLTLAGYYMLAVQVMLMLPIM. The Periplasmic portion of the chain corresponds to 235-243; that stretch reads VNDVAGSPA. The chain crosses the membrane as a helical span at residues 244–264; it reads AVKWMYAIEACLSLTLLYPIA. The Cytoplasmic segment spans residues 265 to 276; that stretch reads RWSEKRFRLEHR. The chain crosses the membrane as a helical span at residues 277–297; sequence LMAGLLIMSLSMIPIGLAGNL. At 298-299 the chain is on the periplasmic side; that stretch reads QQ. Residues 300–320 form a helical membrane-spanning segment; that stretch reads LFTLICAFYIGSVIAEPARET. The Cytoplasmic portion of the chain corresponds to 321–339; the sequence is LSASLTDARARGSYMGFSR. A helical transmembrane segment spans residues 340-360; the sequence is LGLAIGGAIGYIGGGWLFDMG. The Periplasmic segment spans residues 361 to 367; sequence KTLAQPE. The helical transmembrane segment at 368–388 threads the bilayer; that stretch reads LPWMMLGIIGFITFLALGWQF. Residues 389 to 404 are Cytoplasmic-facing; it reads SHKRTPRQYTGARRLI.

The protein belongs to the major facilitator superfamily. DHA1 family. MdtH (TC 2.A.1.2.21) subfamily.

Its subcellular location is the cell inner membrane. In Salmonella arizonae (strain ATCC BAA-731 / CDC346-86 / RSK2980), this protein is Multidrug resistance protein MdtH.